Consider the following 601-residue polypeptide: Elongation factor 4 (601 aa).

In terms of domain architecture, tr-type G spans 6 to 188 (KFTRNFSIIA…AICYLLPPPV (183 aa)). GTP contacts are provided by residues 18–23 (DHGKST) and 135–138 (NKID).

This sequence belongs to the TRAFAC class translation factor GTPase superfamily. Classic translation factor GTPase family. LepA subfamily.

The protein localises to the cell inner membrane. The catalysed reaction is GTP + H2O = GDP + phosphate + H(+). Required for accurate and efficient protein synthesis under certain stress conditions. May act as a fidelity factor of the translation reaction, by catalyzing a one-codon backward translocation of tRNAs on improperly translocated ribosomes. Back-translocation proceeds from a post-translocation (POST) complex to a pre-translocation (PRE) complex, thus giving elongation factor G a second chance to translocate the tRNAs correctly. Binds to ribosomes in a GTP-dependent manner. This chain is Elongation factor 4, found in Leptospira biflexa serovar Patoc (strain Patoc 1 / Ames).